Here is a 562-residue protein sequence, read N- to C-terminus: Tubby-related protein 2 (562 aa).

Residues 1–81 (MDREGPRGPR…RRGEERFQSD (81 aa)) form a disordered region. Positions 35-46 (QKLEQQRQLFEK) are enriched in basic and acidic residues. A phosphoserine mark is found at S152, S153, and S155. Positions 179–294 (LRRGWLASPG…SNHNAWNMTC (116 aa)) are disordered. A Phosphothreonine modification is found at T211. Position 213 is a phosphoserine (S213). Residues 225 to 240 (DGDHGDLAPCKVEENT) show a composition bias toward basic and acidic residues. Over residues 285-294 (SNHNAWNMTC) the composition is skewed to polar residues.

Belongs to the TUB family. Expressed in retina and testis.

It is found in the cytoplasm. The protein resides in the secreted. This Mus musculus (Mouse) protein is Tubby-related protein 2 (Tulp2).